We begin with the raw amino-acid sequence, 505 residues long: MSFGSEHYLCSASSYRKVFGDGSRLSARLSGPGASGSFRSQSLSRSNVASTAACSSASSLGLGLAYRRLPASDGLDLSQAAARTNEYKIIRTNEKEQLQGLNDRFAVFIEKVHQLETQNRALEAELAALRQRHAEPSRVGELFQRELRELRAQLEEASSARAQALLERDGLAEEVQRLRARCEEESRGREGAERALKAQQRDVDGATLARLDLEKKVESLLDELAFVRQVHDEEVAELLATLQASSQAAAEVDVAVAKPDLTSALREIRAQYESLAAKNLQSAEEWYKSKFANLNEQAARSTEAIRASREEIHEYRRQLQARTIEIEGLRGANESLERQILELEERHSAEVAGYQDSIGQLESDLRNTKSEMARHLREYQDLLNVKMALDIEIAAYRKLLEGEETRFSTSGLSISGLNPLPNPSYLLPPRILSSTTSKVSSAGLSLKKEEEEEEEEEEGASKEVTKKTSKVGESFEETLEETVVSTKKTEKSTIEEITTSSSQKM.

Residues 1 to 87 (MSFGSEHYLC…SQAAARTNEY (87 aa)) form a head region. A Phosphoserine modification is found at serine 72. The tract at residues 88-129 (KIIRTNEKEQLQGLNDRFAVFIEKVHQLETQNRALEAELAAL) is coil 1A. The IF rod domain occupies 94–407 (EKEQLQGLND…KLLEGEETRF (314 aa)). The segment at 130–142 (RQRHAEPSRVGEL) is linker 1. Residues 143 to 238 (FQRELRELRA…QVHDEEVAEL (96 aa)) are coil 1B. Serine 219 bears the Phosphoserine mark. Residues 239–262 (LATLQASSQAAAEVDVAVAKPDLT) form a linker 2 region. Residues 263-408 (SALREIRAQY…LLEGEETRFS (146 aa)) form a coil 2 region. Residue lysine 290 is modified to N6-acetyllysine. 3 positions are modified to phosphoserine: serine 335, serine 474, and serine 502. Positions 409 to 505 (TSGLSISGLN…EITTSSSQKM (97 aa)) are tail. Positions 438-505 (KVSSAGLSLK…EITTSSSQKM (68 aa)) are disordered. The span at 495 to 505 (EEITTSSSQKM) shows a compositional bias: low complexity.

It belongs to the intermediate filament family. As to quaternary structure, forms homodimers (in vitro). Forms heterodimers with NEFL, NEFM or NEFH (in vitro). O-glycosylated. Expressed in the dorsal root ganglion neurons (at protein level).

Class-IV neuronal intermediate filament that is able to self-assemble. It is involved in the morphogenesis of neurons. It may form an independent structural network without the involvement of other neurofilaments or it may cooperate with NEFL to form the filamentous backbone to which NEFM and NEFH attach to form the cross-bridges. May also cooperate with the neuronal intermediate filament protein PRPH to form filamentous networks. This is Alpha-internexin (Ina) from Rattus norvegicus (Rat).